We begin with the raw amino-acid sequence, 321 residues long: uncharacterized protein (321 aa).

Positions 1–22 (MKSIYKYTFMLFVFLFGTLMMA) are cleaved as a signal peptide.

This sequence belongs to the bacterial solute-binding protein 1 family. WtpA subfamily.

This is an uncharacterized protein from Petrotoga mobilis (strain DSM 10674 / SJ95).